A 288-amino-acid polypeptide reads, in one-letter code: Elongation factor Ts (288 aa).

Residues 79–82 (TDFV) are involved in Mg(2+) ion dislocation from EF-Tu.

Belongs to the EF-Ts family.

It localises to the cytoplasm. In terms of biological role, associates with the EF-Tu.GDP complex and induces the exchange of GDP to GTP. It remains bound to the aminoacyl-tRNA.EF-Tu.GTP complex up to the GTP hydrolysis stage on the ribosome. The sequence is that of Elongation factor Ts from Ehrlichia chaffeensis (strain ATCC CRL-10679 / Arkansas).